Reading from the N-terminus, the 158-residue chain is Transcription elongation factor GreB (158 aa).

Belongs to the GreA/GreB family. GreB subfamily.

Its function is as follows. Necessary for efficient RNA polymerase transcription elongation past template-encoded arresting sites. The arresting sites in DNA have the property of trapping a certain fraction of elongating RNA polymerases that pass through, resulting in locked ternary complexes. Cleavage of the nascent transcript by cleavage factors such as GreA or GreB allows the resumption of elongation from the new 3'terminus. GreB releases sequences of up to 9 nucleotides in length. This chain is Transcription elongation factor GreB, found in Escherichia coli (strain K12).